A 618-amino-acid polypeptide reads, in one-letter code: Nuclear RNA export factor 1 (618 aa).

Positions Met1–Val15 are enriched in basic and acidic residues. Positions Met1–Gly113 are disordered. Position 2 is an N-acetylalanine (Ala2). The interval Ala2–Ala59 is minor non-specific RNA-binding. An RNA-binding (RBD) region spans residues Ala2–Asn117. An interaction with ALYREF/THOC4 and LUZP4 region spans residues Ala2 to Tyr197. Residues Gln19–Phe28 are compositionally biased toward basic residues. Arg41 carries the asymmetric dimethylarginine; alternate modification. Position 41 is an omega-N-methylarginine; alternate (Arg41). Residues Met60–Asn117 are major non-specific RNA-binding. The interval Met60–Asn117 is RNA binding. Residues Gly66–Arg99 carry the Nuclear localization signal motif. Over residues Arg81–Gln102 the composition is skewed to basic and acidic residues. The Nuclear export signal motif lies at Arg82–Thr109. An RRM domain is found at Trp118 to Tyr197. Residue Tyr125 is modified to 3'-nitrotyrosine. 4 LRR repeats span residues Glu265 to Pro290, Asn291 to Leu314, Lys315 to Glu342, and Arg343 to Pro370. Positions Leu385–Val535 constitute an NTF2 domain. The TAP-C domain maps to Gln564 to Lys618.

It belongs to the NXF family. In terms of assembly, heterodimer (via NTF2 domain) with NXT1. The formation of NXF1-NXT1 heterodimers is required for the NXF1-mediated nuclear mRNA export. Forms a complex with RANBP2/NUP358, NXT1 and RANGAP1. Associates with the exon junction complex (EJC). Associates with the transcription/export (TREX) complex. Found in a mRNA complex with UPF3A and UPF3B. Found in a post-splicing complex with RBM8A, UPF1, UPF2, UPF3A, UPF3B and RNPS1. Interacts (via N-terminus) with DHX9 (via N-terminus); this interaction is direct and negatively regulates NXF1-mediated nuclear export of constitutive transport element (CTE)-containing cellular mRNAs. Interacts with FYTTD1/UIF. Interacts with EIF4A3. Interacts with NUP42. Interacts with ALYREF/THOC4. Interacts with CHTOP. Interacts with FRG1 (via N-terminus). Interacts with LUZP4. Interacts with FMR1; the interaction occurs in a mRNA-dependent and polyribosomes-independent manner in the nucleus. Interacts with CPSF6 (via N-terminus); this interaction is direct. Interacts with RBM15. Interacts with RBM15B. Interacts with MCM3AP; this interaction is not mediated by RNA. Interacts with DDX3X (via C-terminus); this interaction may be partly involved in DDX3X nuclear export and in NXF1 localization to stress granules. Interacts with PABPC1/PABP1.

The protein localises to the nucleus. Its subcellular location is the nucleoplasm. The protein resides in the nucleus speckle. It is found in the nuclear pore complex. It localises to the nucleus envelope. The protein localises to the cytoplasm. Its subcellular location is the stress granule. Functionally, involved in the nuclear export of mRNA species bearing retroviral constitutive transport elements (CTE) and in the export of mRNA from the nucleus to the cytoplasm (TAP/NFX1 pathway). The NXF1-NXT1 heterodimer is involved in the export of HSP70 mRNA in conjunction with ALYREF/THOC4 and THOC5 components of the TREX complex. ALYREF/THOC4-bound mRNA is thought to be transferred to the NXF1-NXT1 heterodimer for export. Also involved in nuclear export of m6A-containing mRNAs: interaction between SRSF3 and YTHDC1 facilitates m6A-containing mRNA-binding to both SRSF3 and NXF1, promoting mRNA nuclear export. The protein is Nuclear RNA export factor 1 (Nxf1) of Rattus norvegicus (Rat).